The sequence spans 906 residues: Formin-like protein 18 (906 aa).

An N-terminal signal peptide occupies residues M1–G25. The chain crosses the membrane as a helical span at residues M120–F140. Disordered regions lie at residues A267–P416 and N854–D906. Positions A274–P292 are enriched in pro residues. Residues S293–P303 are compositionally biased toward basic residues. Pro residues-rich tracts occupy residues A320–S339, G348–G375, and G383–K402. Low complexity-rich tracts occupy residues K403–P416 and N854–F877. In terms of domain architecture, FH2 spans A411–A866. The span at R878–A889 shows a compositional bias: basic and acidic residues. Positions S897–D906 are enriched in low complexity.

The protein belongs to the formin-like family. Class-I subfamily.

The protein localises to the membrane. The sequence is that of Formin-like protein 18 (FH18) from Oryza sativa subsp. japonica (Rice).